The following is a 184-amino-acid chain: uncharacterized protein (184 aa).

Positions 1–20 are cleaved as a signal peptide; the sequence is MTLRKILALTCLLLPMMASA.

To H.influenzae HI_0045.

Its subcellular location is the periplasm. This is an uncharacterized protein from Escherichia coli (strain K12).